The following is a 32-amino-acid chain: Photosystem II reaction center protein T (32 aa).

Residues 3 to 23 form a helical membrane-spanning segment; sequence ALVYTFLLIGTLIVIFFAVFF.

Belongs to the PsbT family. PSII is composed of 1 copy each of membrane proteins PsbA, PsbB, PsbC, PsbD, PsbE, PsbF, PsbH, PsbI, PsbJ, PsbK, PsbL, PsbM, PsbT, PsbX, PsbY, PsbZ, Psb30/Ycf12, at least 3 peripheral proteins of the oxygen-evolving complex and a large number of cofactors. It forms dimeric complexes.

It localises to the plastid. It is found in the chloroplast thylakoid membrane. Found at the monomer-monomer interface of the photosystem II (PS II) dimer, plays a role in assembly and dimerization of PSII. PSII is a light-driven water plastoquinone oxidoreductase, using light energy to abstract electrons from H(2)O, generating a proton gradient subsequently used for ATP formation. This chain is Photosystem II reaction center protein T, found in Phaeodactylum tricornutum (strain CCAP 1055/1).